The following is a 427-amino-acid chain: 3-phosphoshikimate 1-carboxyvinyltransferase (427 aa).

3-phosphoshikimate-binding residues include Lys22, Ser23, and Arg27. A phosphoenolpyruvate-binding site is contributed by Lys22. Residues Gly96 and Arg124 each coordinate phosphoenolpyruvate. Residues Ser169, Ser170, Gln171, Ser197, Asp313, Asn336, and Lys340 each coordinate 3-phosphoshikimate. Gln171 lines the phosphoenolpyruvate pocket. Asp313 acts as the Proton acceptor in catalysis. Positions 344, 386, and 411 each coordinate phosphoenolpyruvate.

Belongs to the EPSP synthase family. In terms of assembly, monomer.

Its subcellular location is the cytoplasm. The enzyme catalyses 3-phosphoshikimate + phosphoenolpyruvate = 5-O-(1-carboxyvinyl)-3-phosphoshikimate + phosphate. Its pathway is metabolic intermediate biosynthesis; chorismate biosynthesis; chorismate from D-erythrose 4-phosphate and phosphoenolpyruvate: step 6/7. Catalyzes the transfer of the enolpyruvyl moiety of phosphoenolpyruvate (PEP) to the 5-hydroxyl of shikimate-3-phosphate (S3P) to produce enolpyruvyl shikimate-3-phosphate and inorganic phosphate. In Enterobacter sp. (strain 638), this protein is 3-phosphoshikimate 1-carboxyvinyltransferase.